A 750-amino-acid polypeptide reads, in one-letter code: Photosystem I P700 chlorophyll a apoprotein A1 (750 aa).

8 helical membrane passes run 70-93, 156-179, 195-219, 291-309, 346-369, 385-411, 433-455, and 531-549; these read VFSA…FHGA, LYCT…FHYH, LNHH…HVSL, TVHH…GHMY, WHAQ…HHMY, LSLF…IFMV, AIIS…LYIH, and FLVH…LILL. Residues Cys-573 and Cys-582 each contribute to the [4Fe-4S] cluster site. 2 helical membrane passes run 589–610 and 664–686; these read HVFL…HFSW and LSAY…MFLF. His-675 lines the chlorophyll a' pocket. Residues Met-683 and Tyr-691 each coordinate chlorophyll a. Trp-692 serves as a coordination point for phylloquinone. Residues 724–744 form a helical membrane-spanning segment; sequence AVGVAHYLLGGIATTWAFFLA.

The protein belongs to the PsaA/PsaB family. In terms of assembly, the PsaA/B heterodimer binds the P700 chlorophyll special pair and subsequent electron acceptors. PSI consists of a core antenna complex that captures photons, and an electron transfer chain that converts photonic excitation into a charge separation. The eukaryotic PSI reaction center is composed of at least 11 subunits. The cofactor is P700 is a chlorophyll a/chlorophyll a' dimer, A0 is one or more chlorophyll a, A1 is one or both phylloquinones and FX is a shared 4Fe-4S iron-sulfur center..

Its subcellular location is the plastid. It is found in the chloroplast thylakoid membrane. It carries out the reaction reduced [plastocyanin] + hnu + oxidized [2Fe-2S]-[ferredoxin] = oxidized [plastocyanin] + reduced [2Fe-2S]-[ferredoxin]. Functionally, psaA and PsaB bind P700, the primary electron donor of photosystem I (PSI), as well as the electron acceptors A0, A1 and FX. PSI is a plastocyanin-ferredoxin oxidoreductase, converting photonic excitation into a charge separation, which transfers an electron from the donor P700 chlorophyll pair to the spectroscopically characterized acceptors A0, A1, FX, FA and FB in turn. Oxidized P700 is reduced on the lumenal side of the thylakoid membrane by plastocyanin. The chain is Photosystem I P700 chlorophyll a apoprotein A1 from Psilotum nudum (Whisk fern).